A 399-amino-acid polypeptide reads, in one-letter code: Phosphoglycerate kinase (399 aa).

Residues D24 to N26, R41, H64 to R67, R123, and R160 each bind substrate. ATP-binding positions include K210, G298, E329, and G355 to S358.

The protein belongs to the phosphoglycerate kinase family. As to quaternary structure, monomer.

It is found in the cytoplasm. It catalyses the reaction (2R)-3-phosphoglycerate + ATP = (2R)-3-phospho-glyceroyl phosphate + ADP. It participates in carbohydrate degradation; glycolysis; pyruvate from D-glyceraldehyde 3-phosphate: step 2/5. The chain is Phosphoglycerate kinase from Salinispora tropica (strain ATCC BAA-916 / DSM 44818 / JCM 13857 / NBRC 105044 / CNB-440).